Consider the following 188-residue polypeptide: UPF0301 protein PsycPRwf_0144 (188 aa).

It belongs to the UPF0301 (AlgH) family.

This is UPF0301 protein PsycPRwf_0144 from Psychrobacter sp. (strain PRwf-1).